The sequence spans 610 residues: Glutamine--fructose-6-phosphate aminotransferase [isomerizing] (610 aa).

The active-site Nucleophile; for GATase activity is the C2. Residues 2–217 (CGIVGYVGQK…DKEFVVLTND (216 aa)) enclose the Glutamine amidotransferase type-2 domain. SIS domains are found at residues 284–424 (ITKE…LKGS) and 453–600 (LIKE…VDKP). Residue K605 is the For Fru-6P isomerization activity of the active site.

Homodimer.

The protein resides in the cytoplasm. It carries out the reaction D-fructose 6-phosphate + L-glutamine = D-glucosamine 6-phosphate + L-glutamate. Functionally, catalyzes the first step in hexosamine metabolism, converting fructose-6P into glucosamine-6P using glutamine as a nitrogen source. This chain is Glutamine--fructose-6-phosphate aminotransferase [isomerizing], found in Clostridium perfringens (strain 13 / Type A).